A 101-amino-acid chain; its full sequence is Small ribosomal subunit protein uS10 (101 aa).

Belongs to the universal ribosomal protein uS10 family. In terms of assembly, part of the 30S ribosomal subunit.

Its function is as follows. Involved in the binding of tRNA to the ribosomes. The chain is Small ribosomal subunit protein uS10 from Corynebacterium efficiens (strain DSM 44549 / YS-314 / AJ 12310 / JCM 11189 / NBRC 100395).